Here is a 562-residue protein sequence, read N- to C-terminus: Membrane protein insertase YidC (562 aa).

The helical transmembrane segment at 4 to 24 (QRIFLFLALSILGLLLWTSWE) threads the bilayer. A disordered region spans residues 33-71 (TEEVVEAEDDVPAPAETPDEAPDPADGETPARDRAEVED). The segment covering 35–58 (EVVEAEDDVPAPAETPDEAPDPAD) has biased composition (acidic residues). The span at 61–71 (TPARDRAEVED) shows a compositional bias: basic and acidic residues. A run of 4 helical transmembrane segments spans residues 330–350 (MTLS…FWLL), 356–376 (IVGN…LAFY), 426–446 (LGGC…YWVL), and 499–519 (IMMA…AGLV).

Belongs to the OXA1/ALB3/YidC family. Type 1 subfamily. As to quaternary structure, interacts with the Sec translocase complex via SecD. Specifically interacts with transmembrane segments of nascent integral membrane proteins during membrane integration.

It is found in the cell inner membrane. In terms of biological role, required for the insertion and/or proper folding and/or complex formation of integral membrane proteins into the membrane. Involved in integration of membrane proteins that insert both dependently and independently of the Sec translocase complex, as well as at least some lipoproteins. Aids folding of multispanning membrane proteins. This chain is Membrane protein insertase YidC, found in Alkalilimnicola ehrlichii (strain ATCC BAA-1101 / DSM 17681 / MLHE-1).